The primary structure comprises 344 residues: Intraflagellar transport protein 46 (344 aa).

Positions 1–16 (MDDSMDYPDRDGDDLD) are enriched in acidic residues. Residues 1–100 (MDDSMDYPDR…IANSDEAPPG (100 aa)) are disordered. Residues 18–30 (FQGTARSQVVQNQ) show a composition bias toward polar residues.

It belongs to the IFT46 family. Component of the IFT complex B, the core composed of IFT25, IFT27, IFT46, IFT52, IFT74, IFT81 and IFT88 as well as associated subunits IFT20, IFT57, IFT80 and IFT172. Interacts with IFT25, IFT52, IFT70, IFT88 and DAW1.

It is found in the cytoplasm. Its subcellular location is the cytoskeleton. It localises to the cilium basal body. The protein resides in the cell projection. The protein localises to the cilium. In terms of biological role, forms part of a complex involved in intraflagellar transport (IFT), the bi-directional movement of particles required for the assembly, maintenance and functioning of primary cilia. Plays a role in maintaining IFT complex B stability. This chain is Intraflagellar transport protein 46, found in Chlamydomonas reinhardtii (Chlamydomonas smithii).